Consider the following 89-residue polypeptide: Small ribosomal subunit protein uS15 (89 aa).

This sequence belongs to the universal ribosomal protein uS15 family. Part of the 30S ribosomal subunit. Forms a bridge to the 50S subunit in the 70S ribosome, contacting the 23S rRNA.

Its function is as follows. One of the primary rRNA binding proteins, it binds directly to 16S rRNA where it helps nucleate assembly of the platform of the 30S subunit by binding and bridging several RNA helices of the 16S rRNA. In terms of biological role, forms an intersubunit bridge (bridge B4) with the 23S rRNA of the 50S subunit in the ribosome. The sequence is that of Small ribosomal subunit protein uS15 from Bordetella avium (strain 197N).